Consider the following 272-residue polypeptide: HMP-PP phosphatase (272 aa).

Asp-8 (nucleophile) is an active-site residue. 3 residues coordinate Mg(2+): Asp-8, Asp-10, and Asp-212.

The protein belongs to the HAD-like hydrolase superfamily. Cof family. It depends on Mg(2+) as a cofactor.

The enzyme catalyses 4-amino-2-methyl-5-(diphosphooxymethyl)pyrimidine + H2O = 4-amino-2-methyl-5-(phosphooxymethyl)pyrimidine + phosphate + H(+). Its function is as follows. Catalyzes the hydrolysis of 4-amino-2-methyl-5-hydroxymethylpyrimidine pyrophosphate (HMP-PP) to 4-amino-2-methyl-5-hydroxymethylpyrimidine phosphate (HMP-P). This is HMP-PP phosphatase from Escherichia coli (strain UTI89 / UPEC).